The following is a 156-amino-acid chain: Protein archease-like (156 aa).

Positions 25, 155, and 156 each coordinate Ca(2+).

This sequence belongs to the archease family.

Its function is as follows. Component of the tRNA-splicing ligase complex required to facilitate the enzymatic turnover of catalytic subunit RtcB. Plays an important role in a RNA repair and splicing pathway which controls axon regeneration in response to peripheral (PNS) and central nervous system (CNS) injury, by activating splicing of Xbp1 to promote axon regeneration in response to axotomy. This Drosophila melanogaster (Fruit fly) protein is Protein archease-like.